The sequence spans 371 residues: Alginate lyase (371 aa).

An N-terminal signal peptide occupies residues 1–28; that stretch reads MRRPMTLFKRISSPALLALALFGGAAHA. Residues 67–68, 140–141, and Tyr258 each bind substrate; these read SK and HT.

Belongs to the polysaccharide lyase 5 family.

It is found in the periplasm. The enzyme catalyses Eliminative cleavage of alginate to give oligosaccharides with 4-deoxy-alpha-L-erythro-hex-4-enuronosyl groups at their non-reducing ends and beta-D-mannuronate at their reducing end.. Catalyzes the depolymerization of alginate by cleaving the beta-1,4 glycosidic bond between two adjacent sugar residues via a beta-elimination mechanism. May serve to degrade mislocalized alginate that is trapped in the periplasmic space. The sequence is that of Alginate lyase from Pseudomonas putida (strain ATCC 47054 / DSM 6125 / CFBP 8728 / NCIMB 11950 / KT2440).